A 434-amino-acid chain; its full sequence is Histidinol dehydrogenase (434 aa).

Positions 130, 188, and 211 each coordinate NAD(+). Positions 237, 259, and 262 each coordinate substrate. Residues Gln259 and His262 each contribute to the Zn(2+) site. Catalysis depends on proton acceptor residues Glu326 and His327. Positions 327, 360, 414, and 419 each coordinate substrate. Asp360 contacts Zn(2+). Residue His419 participates in Zn(2+) binding.

The protein belongs to the histidinol dehydrogenase family. As to quaternary structure, homodimer. Zn(2+) serves as cofactor.

It catalyses the reaction L-histidinol + 2 NAD(+) + H2O = L-histidine + 2 NADH + 3 H(+). It participates in amino-acid biosynthesis; L-histidine biosynthesis; L-histidine from 5-phospho-alpha-D-ribose 1-diphosphate: step 9/9. Its function is as follows. Catalyzes the sequential NAD-dependent oxidations of L-histidinol to L-histidinaldehyde and then to L-histidine. This is Histidinol dehydrogenase from Shigella boydii serotype 4 (strain Sb227).